We begin with the raw amino-acid sequence, 155 residues long: Myosin light chain alkali (155 aa).

2 consecutive EF-hand domains span residues 7 to 41 (REIE…LNLN) and 80 to 115 (GCYE…LGES).

As to quaternary structure, myosin is a hexamer of 2 heavy chains and 4 light chains.

This chain is Myosin light chain alkali (Mlc1), found in Drosophila pseudoobscura pseudoobscura (Fruit fly).